Here is a 66-residue protein sequence, read N- to C-terminus: Potassium channel toxin alpha-KTx 27.3 (66 aa).

Residues 1 to 17 form the signal peptide; sequence MKLMWLLFLCVLAFSIA.

The protein belongs to the short scorpion toxin superfamily. Potassium channel inhibitor family. Alpha-KTx 27 subfamily. Contains 4 disulfide bonds. Expressed by the venom gland.

It is found in the secreted. In Lychas mucronatus (Chinese swimming scorpion), this protein is Potassium channel toxin alpha-KTx 27.3.